A 61-amino-acid chain; its full sequence is Peroxidase 1 (61 aa).

The tract at residues 1-32 (DNTAKEKDSPANLSLRTCAAGDNAEQPLDPSR) is disordered. N-linked (GlcNAc...) asparagine glycosylation occurs at asparagine 12. Ca(2+) is bound by residues aspartate 29, serine 31, and aspartate 36.

The protein belongs to the peroxidase family. Classical plant (class III) peroxidase subfamily. Ca(2+) serves as cofactor. Heme b is required as a cofactor.

It localises to the secreted. It carries out the reaction 2 a phenolic donor + H2O2 = 2 a phenolic radical donor + 2 H2O. Its function is as follows. Removal of H(2)O(2), oxidation of toxic reductants, biosynthesis and degradation of lignin, suberization, auxin catabolism, response to environmental stresses such as wounding, pathogen attack and oxidative stress. These functions might be dependent on each isozyme/isoform in each plant tissue. The polypeptide is Peroxidase 1 (Vitis rotundifolia (Muscadine grape)).